We begin with the raw amino-acid sequence, 359 residues long: Chondroadherin (359 aa).

The signal sequence occupies residues 1 to 22; the sequence is MVRPMLLLSLGLLAGLLPALAA. The cysteines at positions 23 and 38 are disulfide-linked. The LRRNT domain maps to 23–52; it reads CPQNCHCHSDLQHVICDKVGLQKIPKVSEK. 9 LRR repeats span residues 76 to 97, 100 to 121, 124 to 145, 148 to 169, 172 to 193, 196 to 217, 220 to 241, 245 to 266, and 269 to 290; these read NLVSLHLQHCQIREVAAGAFRG, QLIYLYLSHNDIRVLRAGAFDD, ELTYLYLDHNKVTELPRGLLSP, NLFILQLNNNKIRELRAGAFQG, DLRWLYLSENALSSLQPGALDD, NLAKFHVDRNQLSSYPSAALSK, VVEELKLSHNPLKSIPDNAFQS, YLETLWLDNTNLEKFSDGAFLG, and TLKHVHLENNRLNQLPSNFPFD. Residue Ser-144 is glycosylated (O-linked (GalNAc...) serine). One can recognise an LRRCT domain in the interval 300-348; that stretch reads NPWKCTCQLRGLRRWLEAKASRPDATCASPAKFKGQHIRDTDAFRSCKF. 2 cysteine pairs are disulfide-bonded: Cys-304/Cys-346 and Cys-306/Cys-326.

The protein belongs to the small leucine-rich proteoglycan (SLRP) family. SLRP class IV subfamily. As to quaternary structure, mostly monomeric. Interacts with collagen type II. As to expression, present in chondrocytes at all ages.

Its subcellular location is the secreted. The protein resides in the extracellular space. It localises to the extracellular matrix. In terms of biological role, promotes attachment of chondrocytes, fibroblasts, and osteoblasts. This binding is mediated (at least for chondrocytes and fibroblasts) by the integrin alpha(2)beta(1). May play an important role in the regulation of chondrocyte growth and proliferation. In Homo sapiens (Human), this protein is Chondroadherin (CHAD).